The chain runs to 734 residues: Photosystem I P700 chlorophyll a apoprotein A2 (734 aa).

The next 8 membrane-spanning stretches (helical) occupy residues 46-69, 135-158, 175-199, 273-291, 330-353, 369-395, 417-439, and 517-535; these read IFAS…FHVA, LYTG…LHLQ, LNHH…HVAI, IAHH…GHMY, IHFQ…QHMY, AALY…IFFI, AIKS…LYVH, and FLVH…LILV. The [4Fe-4S] cluster site is built by Cys559 and Cys568. The next 2 helical transmembrane spans lie at 575-596 and 643-665; these read AFYL…YWHW and LSVW…MFLI. Residues His654, Met662, and Tyr670 each coordinate chlorophyll a. Trp671 is a binding site for phylloquinone. The chain crosses the membrane as a helical span at residues 707–727; it reads LVGLAHFSVGYIFTYAAFLIA.

It belongs to the PsaA/PsaB family. The PsaA/B heterodimer binds the P700 chlorophyll special pair and subsequent electron acceptors. PSI consists of a core antenna complex that captures photons, and an electron transfer chain that converts photonic excitation into a charge separation. The eukaryotic PSI reaction center is composed of at least 11 subunits. P700 is a chlorophyll a/chlorophyll a' dimer, A0 is one or more chlorophyll a, A1 is one or both phylloquinones and FX is a shared 4Fe-4S iron-sulfur center. is required as a cofactor.

The protein resides in the plastid. The protein localises to the chloroplast thylakoid membrane. The catalysed reaction is reduced [plastocyanin] + hnu + oxidized [2Fe-2S]-[ferredoxin] = oxidized [plastocyanin] + reduced [2Fe-2S]-[ferredoxin]. In terms of biological role, psaA and PsaB bind P700, the primary electron donor of photosystem I (PSI), as well as the electron acceptors A0, A1 and FX. PSI is a plastocyanin-ferredoxin oxidoreductase, converting photonic excitation into a charge separation, which transfers an electron from the donor P700 chlorophyll pair to the spectroscopically characterized acceptors A0, A1, FX, FA and FB in turn. Oxidized P700 is reduced on the lumenal side of the thylakoid membrane by plastocyanin. This chain is Photosystem I P700 chlorophyll a apoprotein A2, found in Amborella trichopoda.